A 547-amino-acid polypeptide reads, in one-letter code: CTP synthase (547 aa).

The segment at 1–265 (MTRYVFITGG…DEIVLRKLHI (265 aa)) is amidoligase domain. CTP is bound at residue Ser13. Residue Ser13 coordinates UTP. ATP-binding positions include 14–19 (SLGKGI) and Asp71. Mg(2+)-binding residues include Asp71 and Glu139. CTP is bound by residues 146–148 (DIE), 186–191 (KTKPTQ), and Lys222. Residues 186-191 (KTKPTQ) and Lys222 each bind UTP. The 252-residue stretch at 290–541 (TVGMVGKYVD…IRAARAQHEK (252 aa)) folds into the Glutamine amidotransferase type-1 domain. Gly351 is an L-glutamine binding site. The Nucleophile; for glutamine hydrolysis role is filled by Cys378. Residues 379-382 (LGMQ), Glu402, and Arg469 contribute to the L-glutamine site. Active-site residues include His514 and Glu516.

It belongs to the CTP synthase family. In terms of assembly, homotetramer.

The enzyme catalyses UTP + L-glutamine + ATP + H2O = CTP + L-glutamate + ADP + phosphate + 2 H(+). It carries out the reaction L-glutamine + H2O = L-glutamate + NH4(+). The catalysed reaction is UTP + NH4(+) + ATP = CTP + ADP + phosphate + 2 H(+). It functions in the pathway pyrimidine metabolism; CTP biosynthesis via de novo pathway; CTP from UDP: step 2/2. Its activity is regulated as follows. Allosterically activated by GTP, when glutamine is the substrate; GTP has no effect on the reaction when ammonia is the substrate. The allosteric effector GTP functions by stabilizing the protein conformation that binds the tetrahedral intermediate(s) formed during glutamine hydrolysis. Inhibited by the product CTP, via allosteric rather than competitive inhibition. Its function is as follows. Catalyzes the ATP-dependent amination of UTP to CTP with either L-glutamine or ammonia as the source of nitrogen. Regulates intracellular CTP levels through interactions with the four ribonucleotide triphosphates. This Thioalkalivibrio sulfidiphilus (strain HL-EbGR7) protein is CTP synthase.